A 352-amino-acid polypeptide reads, in one-letter code: Maleylacetate reductase (352 aa).

Residues 93–94 and 115–119 contribute to the NAD(+) site; these read GS and TTYAG.

Belongs to the iron-containing alcohol dehydrogenase family. Requires The maleylacetate reductase family of enzymes does not require any metal ion for activity, despite being related to the family III metal-dependent polyol dehydrogenases. as cofactor.

It catalyses the reaction 3-oxoadipate + NAD(+) = maleylacetate + NADH + H(+). The protein operates within xenobiotic degradation; gamma-hexachlorocyclohexane degradation. In terms of biological role, catalyzes the NADH-dependent reduction of maleylacetate to beta-ketoadipate, a step in the degradation of gamma-hexachlorocyclohexane (gamma-HCH or lindane). Has an essential role in this assimilation pathway that allows S.japonicum UT26 to grow on gamma-HCH as the sole source of carbon and energy. This chain is Maleylacetate reductase, found in Sphingobium indicum (strain DSM 16413 / CCM 7287 / MTCC 6362 / UT26 / NBRC 101211 / UT26S) (Sphingobium japonicum).